Consider the following 189-residue polypeptide: uncharacterized protein (189 aa).

The next 4 membrane-spanning stretches (helical) occupy residues 49 to 69 (LLGI…LFVF), 78 to 98 (LFHK…LSLF), 102 to 122 (LTIV…FPMI), and 124 to 144 (VSIA…LFPA). The segment at 165 to 189 (SSSAPDLNYPSLPTQSASPSQRFSA) is disordered.

Belongs to the chlamydial CPn_0442/CT_006/TC_0274 family.

Its subcellular location is the cell membrane. This is an uncharacterized protein from Chlamydia trachomatis serovar D (strain ATCC VR-885 / DSM 19411 / UW-3/Cx).